A 239-amino-acid chain; its full sequence is Probable transcriptional regulatory protein RBAM_007230 (239 aa).

This sequence belongs to the TACO1 family. YeeN subfamily.

The protein resides in the cytoplasm. The sequence is that of Probable transcriptional regulatory protein RBAM_007230 from Bacillus velezensis (strain DSM 23117 / BGSC 10A6 / LMG 26770 / FZB42) (Bacillus amyloliquefaciens subsp. plantarum).